Consider the following 488-residue polypeptide: Receptor-like tyrosine-protein kinase kin-15 (488 aa).

The N-terminal stretch at Met1–Ser26 is a signal peptide. N-linked (GlcNAc...) asparagine glycosylation is present at Asn25. Topologically, residues Thr27 to Met50 are extracellular. The helical transmembrane segment at Phe51 to Leu70 threads the bilayer. Residues Ser71–Asp488 are Cytoplasmic-facing. In terms of domain architecture, Protein kinase spans Glu144–Val458. Residues Leu150–Val158 and Lys183 each bind ATP. The active-site Proton acceptor is the Asp319.

Belongs to the protein kinase superfamily. Tyr protein kinase family. As to expression, hypodermal cells.

The protein resides in the cell membrane. It carries out the reaction L-tyrosyl-[protein] + ATP = O-phospho-L-tyrosyl-[protein] + ADP + H(+). May be specifically involved in cell-cell interactions regulating cell fusions that generate the hypodermis during postembryonic development. It has a role in the development of the HYP7 hypodermal syncytium. The polypeptide is Receptor-like tyrosine-protein kinase kin-15 (kin-15) (Caenorhabditis elegans).